A 116-amino-acid chain; its full sequence is Putative iron-sulfur cluster insertion protein ErpA (116 aa).

Cysteine 44, cysteine 108, and cysteine 110 together coordinate iron-sulfur cluster.

The protein belongs to the HesB/IscA family. Homodimer. Requires iron-sulfur cluster as cofactor.

Functionally, required for insertion of 4Fe-4S clusters. The sequence is that of Putative iron-sulfur cluster insertion protein ErpA from Janthinobacterium sp. (strain Marseille) (Minibacterium massiliensis).